The primary structure comprises 120 residues: Ribosome-binding factor A (120 aa).

The protein belongs to the RbfA family. As to quaternary structure, monomer. Binds 30S ribosomal subunits, but not 50S ribosomal subunits or 70S ribosomes.

Its subcellular location is the cytoplasm. Functionally, one of several proteins that assist in the late maturation steps of the functional core of the 30S ribosomal subunit. Associates with free 30S ribosomal subunits (but not with 30S subunits that are part of 70S ribosomes or polysomes). Required for efficient processing of 16S rRNA. May interact with the 5'-terminal helix region of 16S rRNA. The protein is Ribosome-binding factor A of Limosilactobacillus fermentum (strain NBRC 3956 / LMG 18251) (Lactobacillus fermentum).